The chain runs to 538 residues: RNA-binding protein Ro60 (538 aa).

The residue at position 1 (methionine 1) is an N-acetylmethionine. A phosphoserine mark is found at serine 4 and serine 19. Residues 16 to 369 form the TROVE domain; the sequence is VVNSEGGCVW…TFKTVEPTGK (354 aa). The interval 120-284 is RNA-binding; it reads RIPTHLFTFI…EMPLTALLRN (165 aa). Lysine 224 is subject to N6-acetyllysine. A VWFA-like domain region spans residues 361–538; that stretch reads FKTVEPTGKR…VIRNFTLDVI (178 aa). Positions 378, 380, and 445 each coordinate a divalent metal cation.

Belongs to the Ro 60 kDa family. In terms of assembly, identified in a IGF2BP1-dependent mRNP granule complex containing untranslated mRNAs. Found in a complex with PUF60 and Y5 RNA. Interacts with RAB11FIP5. As to expression, highest in brain, followed by lung, muscle, kidney and heart. Lower levels are found in testis, liver and spleen.

The protein localises to the cytoplasm. Its function is as follows. RNA-binding protein that binds to misfolded non-coding RNAs, pre-5S rRNA, and several small cytoplasmic RNA molecules known as Y RNAs. May play roles in cilia formation and/or maintenance. The sequence is that of RNA-binding protein Ro60 from Mus musculus (Mouse).